Consider the following 583-residue polypeptide: Vivapain-1 (583 aa).

At 1–34 (MAQDIKIMNLTKSSLEALNRNQMLSKKSSRKILK) the chain is on the cytoplasmic side. Positions 1 to 338 (MAQDIKIMNL…SSSGANLLAD (338 aa)) are cleaved as a propeptide — activation peptide. The helical; Signal-anchor for type II membrane protein transmembrane segment at 35 to 55 (ICMYAILTFAMCGVVLICLTA) threads the bilayer. The Lumenal segment spans residues 56-583 (MSNSDGSLTQ…IGVEVFYPIL (528 aa)). Residues 62–82 (SLTQSGSHNQSGSLKGLSSTP) are compositionally biased toward polar residues. Disordered stretches follow at residues 62-83 (SLTQ…STPG) and 104-125 (PHGN…ALPN). N-linked (GlcNAc...) asparagine glycosylation occurs at Asn-70. The segment covering 106–119 (GNRDPTGDDVEKPA) has biased composition (basic and acidic residues). 2 N-linked (GlcNAc...) asparagine glycosylation sites follow: Asn-195 and Asn-272. 3 cysteine pairs are disulfide-bonded: Cys-360/Cys-402, Cys-395/Cys-435, and Cys-420/Cys-440. Cys-363 is an active-site residue. N-linked (GlcNAc...) asparagine glycosylation is present at Asn-381. Asn-486 and Asn-494 each carry an N-linked (GlcNAc...) asparagine glycan. Cys-489 and Cys-572 form a disulfide bridge. Residues His-495 and Asn-547 contribute to the active site.

This sequence belongs to the peptidase C1 family.

Its subcellular location is the membrane. Functionally, cysteine protease. This chain is Vivapain-1, found in Plasmodium vivax (strain Salvador I).